Here is a 98-residue protein sequence, read N- to C-terminus: uncharacterized protein (98 aa).

It is found in the cytoplasm. This is an uncharacterized protein from Saccharomyces cerevisiae (strain ATCC 204508 / S288c) (Baker's yeast).